The sequence spans 873 residues: Valine--tRNA ligase (873 aa).

Residues 43-53 carry the 'HIGH' region motif; it reads PNVTGVLHMGH. The short motif at 532–536 is the 'KMSKS' region element; that stretch reads KMSKS. Residue K535 coordinates ATP. Positions 802–873 form a coiled coil; it reads LGNLINVEEE…IEESIAALTK (72 aa).

This sequence belongs to the class-I aminoacyl-tRNA synthetase family. ValS type 1 subfamily. In terms of assembly, monomer.

Its subcellular location is the cytoplasm. The enzyme catalyses tRNA(Val) + L-valine + ATP = L-valyl-tRNA(Val) + AMP + diphosphate. Catalyzes the attachment of valine to tRNA(Val). As ValRS can inadvertently accommodate and process structurally similar amino acids such as threonine, to avoid such errors, it has a 'posttransfer' editing activity that hydrolyzes mischarged Thr-tRNA(Val) in a tRNA-dependent manner. In Parabacteroides distasonis (strain ATCC 8503 / DSM 20701 / CIP 104284 / JCM 5825 / NCTC 11152), this protein is Valine--tRNA ligase.